The sequence spans 251 residues: MTVTMRQMLEAGVHFGHQTRFWNPRMAPYIFGQRNKIHIVNLEKTMGKYNEAMNYVRKLAANRGTILLVGTKRQAREIVSEEASRAGMPFVDERWLGGMLTNFKTVKQSIKRLKEMEAMVEDGSIERLSKKEALMATREMDKLKKSIGGIKDMGGLPDAMFVIDVGYHKIAITEAQKLGIPIVAVVDTNHSPEGIDYVIPGNDDSSRAIRLYARGVADAVLEGRSQALQDVVAAGSDEFVEVQEDGSDEQA.

The protein belongs to the universal ribosomal protein uS2 family.

In Aromatoleum aromaticum (strain DSM 19018 / LMG 30748 / EbN1) (Azoarcus sp. (strain EbN1)), this protein is Small ribosomal subunit protein uS2.